Consider the following 158-residue polypeptide: Small ribosomal subunit protein uS17 (158 aa).

Residue alanine 2 is modified to N-acetylalanine. Citrulline is present on arginine 22. 3 positions are modified to N6-acetyllysine: lysine 38, lysine 45, and lysine 58. Residue cysteine 60 is the site of S-palmitoyl cysteine attachment. At serine 67 the chain carries Phosphoserine. Position 69 is an omega-N-methylarginine (arginine 69). Serine 110 is modified (phosphoserine).

It belongs to the universal ribosomal protein uS17 family. As to quaternary structure, component of the small ribosomal subunit. Part of the small subunit (SSU) processome, composed of more than 70 proteins and the RNA chaperone small nucleolar RNA (snoRNA) U3. Citrullinated by PADI4.

It is found in the cytoplasm. Its subcellular location is the nucleus. The protein resides in the nucleolus. Its function is as follows. Component of the small ribosomal subunit. The ribosome is a large ribonucleoprotein complex responsible for the synthesis of proteins in the cell. Part of the small subunit (SSU) processome, first precursor of the small eukaryotic ribosomal subunit. During the assembly of the SSU processome in the nucleolus, many ribosome biogenesis factors, an RNA chaperone and ribosomal proteins associate with the nascent pre-rRNA and work in concert to generate RNA folding, modifications, rearrangements and cleavage as well as targeted degradation of pre-ribosomal RNA by the RNA exosome. In Canis lupus familiaris (Dog), this protein is Small ribosomal subunit protein uS17 (RPS11).